Consider the following 305-residue polypeptide: UDP-3-O-acyl-N-acetylglucosamine deacetylase (305 aa).

Residues His78, His237, and Asp241 each coordinate Zn(2+). The active-site Proton donor is His264.

This sequence belongs to the LpxC family. It depends on Zn(2+) as a cofactor.

It catalyses the reaction a UDP-3-O-[(3R)-3-hydroxyacyl]-N-acetyl-alpha-D-glucosamine + H2O = a UDP-3-O-[(3R)-3-hydroxyacyl]-alpha-D-glucosamine + acetate. The protein operates within glycolipid biosynthesis; lipid IV(A) biosynthesis; lipid IV(A) from (3R)-3-hydroxytetradecanoyl-[acyl-carrier-protein] and UDP-N-acetyl-alpha-D-glucosamine: step 2/6. Functionally, catalyzes the hydrolysis of UDP-3-O-myristoyl-N-acetylglucosamine to form UDP-3-O-myristoylglucosamine and acetate, the committed step in lipid A biosynthesis. This is UDP-3-O-acyl-N-acetylglucosamine deacetylase from Burkholderia cenocepacia (strain ATCC BAA-245 / DSM 16553 / LMG 16656 / NCTC 13227 / J2315 / CF5610) (Burkholderia cepacia (strain J2315)).